A 71-amino-acid chain; its full sequence is Exodeoxyribonuclease 7 small subunit (71 aa).

The protein belongs to the XseB family. In terms of assembly, heterooligomer composed of large and small subunits.

It is found in the cytoplasm. The enzyme catalyses Exonucleolytic cleavage in either 5'- to 3'- or 3'- to 5'-direction to yield nucleoside 5'-phosphates.. Functionally, bidirectionally degrades single-stranded DNA into large acid-insoluble oligonucleotides, which are then degraded further into small acid-soluble oligonucleotides. The sequence is that of Exodeoxyribonuclease 7 small subunit from Streptococcus equi subsp. equi (strain 4047).